Reading from the N-terminus, the 102-residue chain is Integration host factor subunit beta (102 aa).

It belongs to the bacterial histone-like protein family. In terms of assembly, heterodimer of an alpha and a beta chain.

Its function is as follows. This protein is one of the two subunits of integration host factor, a specific DNA-binding protein that functions in genetic recombination as well as in transcriptional and translational control. The chain is Integration host factor subunit beta from Rhodopseudomonas palustris (strain BisA53).